The primary structure comprises 638 residues: DNA gyrase subunit B (638 aa).

Residues 422-536 (SELYIVEGDS…NGYVYIAQPP (115 aa)) form the Toprim domain. Mg(2+) contacts are provided by E428, D501, and D503.

This sequence belongs to the type II topoisomerase GyrB family. As to quaternary structure, heterotetramer, composed of two GyrA and two GyrB chains. In the heterotetramer, GyrA contains the active site tyrosine that forms a transient covalent intermediate with DNA, while GyrB binds cofactors and catalyzes ATP hydrolysis. It depends on Mg(2+) as a cofactor. Requires Mn(2+) as cofactor. Ca(2+) serves as cofactor.

Its subcellular location is the cytoplasm. It catalyses the reaction ATP-dependent breakage, passage and rejoining of double-stranded DNA.. Its function is as follows. A type II topoisomerase that negatively supercoils closed circular double-stranded (ds) DNA in an ATP-dependent manner to modulate DNA topology and maintain chromosomes in an underwound state. Negative supercoiling favors strand separation, and DNA replication, transcription, recombination and repair, all of which involve strand separation. Also able to catalyze the interconversion of other topological isomers of dsDNA rings, including catenanes and knotted rings. Type II topoisomerases break and join 2 DNA strands simultaneously in an ATP-dependent manner. The polypeptide is DNA gyrase subunit B (Bacillus subtilis (strain 168)).